Reading from the N-terminus, the 80-residue chain is Conotoxin ArMKLT2-0321 (80 aa).

An N-terminal signal peptide occupies residues 1–21 (MKLTCVLIIAMLFLIVCQLNT). Positions 22 to 48 (ADDSTDKQEYRAVKLRDAMRNFKGSKR) are excised as a propeptide. Cystine bridges form between C50-C63, C57-C68, and C62-C77.

Belongs to the conotoxin O1 superfamily. Expressed by the venom duct.

It is found in the secreted. This chain is Conotoxin ArMKLT2-0321, found in Conus arenatus (Sand-dusted cone).